Reading from the N-terminus, the 243-residue chain is tRNA pseudouridine synthase A (243 aa).

Asp53 (nucleophile) is an active-site residue. Tyr111 is a substrate binding site.

Belongs to the tRNA pseudouridine synthase TruA family. As to quaternary structure, homodimer.

The catalysed reaction is uridine(38/39/40) in tRNA = pseudouridine(38/39/40) in tRNA. Functionally, formation of pseudouridine at positions 38, 39 and 40 in the anticodon stem and loop of transfer RNAs. In Chlorobium limicola (strain DSM 245 / NBRC 103803 / 6330), this protein is tRNA pseudouridine synthase A.